A 910-amino-acid polypeptide reads, in one-letter code: MDTNFKLSNCIGTVYRDGQVAFSKDGYSVISPIGNKLSIFDLRNNTSKTLDIDCNYNIKRLSISPSGYHLLASDERGVVHFVHLLSEFKIYTFRSNKPIGSLQWSPDATRVAICRENDLQIHEFGKSIENKVYNPFSLSRTYKLSSDSLKTIDWSDDANLLVSGGEDRVVRVVGAKDFKNLFIHPLASHKGYIVNCQFMKNSYDMITVCKRGLANVWTCNLRPGELVEGIWKKDEEGSDDIEMLEDGEQKVEKIFFEKTKKYWLSESSGSGKSVDVTAARFHKETNILATAFNNGVIVLHEIPSFALVHNLRVSEMRIQTVAWNLTGDWLAIGCGKGSTAQLVVWEWQSESYVMKQQAHSLRITTAEYSPDGSLMATGAEDGKVKIWNSRSSFCTVTFDEHTSGVTAVKWTQSGRAILSASLDGTVRAHDLKRYRNFRTLVCPEPTQLATLAVDKAGDLVIAGAKEVFNIYIWSFETGHLLDILSGHESAISSIDIHGNHIVSGSWDRTIKMWTIVDSQAETVEVSHEALDVKFSPAGDEIAVLTSDGVITFFEAKEMINLGSIDTKLDTDPARGSRDTITRQSAAKTKTFTRIRFSPDGNLLLAGGESNNFCLYSVPERMILKKWQITANRSLDGVILDFNRRNFTEFGNMQLVDTSDEEDELEPNNKMSIKLPGTKNFDLGERRARPEVNIYEVTYCPTGRRFAICSTEGVSVYSLDTISMFDPFQLDSQTNAEVIKRAVWNNDYSTAIMASLRLNNAQYITECLESTSISQIPLVASSLPLMYAERLLKWMVEGNVMSSTRHVHFYMIWLRAILQHHGMQLKGRADVATLTGIQQIVAHHQQHITKLANQNKFALNWLVKIRQSKKSVKKEEEEEEDVSDESDDEDIEDESAGSDDEDSDDSVEIIE.

14 WD repeats span residues 12 to 50 (GTVYRDGQVAFSKDGYSVISPIGNKLSIFDLRNNTSKTL), 53 to 92 (DCNYNIKRLSISPSGYHLLASDERGVVHFVHLLSEFKIYT), 94 to 134 (RSNK…KVYN), 144 to 183 (LSSDSLKTIDWSDDANLLVSGGEDRVVRVVGAKDFKNLFI), 188 to 227 (SHKGYIVNCQFMKNSYDMITVCKRGLANVWTCNLRPGELV), 271 to 310 (GKSVDVTAARFHKETNILATAFNNGVIVLHEIPSFALVHN), 313 to 355 (VSEM…YVMK), 358 to 397 (AHSLRITTAEYSPDGSLMATGAEDGKVKIWNSRSSFCTVT), 400 to 439 (EHTSGVTAVKWTQSGRAILSASLDGTVRAHDLKRYRNFRT), 443 to 485 (PEPT…DILS), 486 to 523 (GHESAISSIDIHGNHIVSGSWDRTIKMWTIVDSQAETV), 525 to 563 (VSHEALDVKFSPAGDEIAVLTSDGVITFFEAKEMINLGS), 586 to 625 (AKTKTFTRIRFSPDGNLLLAGGESNNFCLYSVPERMILKK), and 688 to 728 (RPEV…DPFQ). The interval 867-910 (SKKSVKKEEEEEEDVSDESDDEDIEDESAGSDDEDSDDSVEIIE) is disordered. The span at 875–910 (EEEEEDVSDESDDEDIEDESAGSDDEDSDDSVEIIE) shows a compositional bias: acidic residues.

This sequence belongs to the WD repeat PWP2 family.

This is Periodic tryptophan protein 2 homolog from Caenorhabditis elegans.